Reading from the N-terminus, the 270-residue chain is Bacterial microcompartment shell protein PduB (270 aa).

2 BMC circularly permuted domains span residues 47 to 152 and 154 to 262; these read EFVG…DRTF and DVYA…GSEP.

The protein belongs to the EutL/PduB family. In terms of assembly, homotrimerizes to form a pseudohexamer with a central pore. The trimers pack into an array. Both forms interact with shell protein PduA. In terms of processing, in purified BMCs seen as a 30.0 kDa and 25.0 kDa form; the smaller form is called PduB'.

The protein resides in the bacterial microcompartment. Its pathway is polyol metabolism; 1,2-propanediol degradation. In terms of biological role, the two proteins produced are among the major shell proteins of the bacterial microcompartment (BMC) shell dedicated to 1,2-propanediol (1,2-PD) degradation. Overexpression of the gene gives large amorphous intracellular structures; when only PduB is overexpressed large circular bodies are observed which contain concentric rings, whereas with PduB' overexpression internal bodies with regular straight-lined structures were generated. The N-terminus of the long form (PduB) is required for correct formation of BMCs. May play a major role in binding the enzyme contents to the shell. Functionally, expression of a cosmid containing the full 21-gene pdu operon in E.coli allows E.coli to grow on 1,2-propanediol (1,2-PD) with the appearance of BMCs in its cytoplasm. The 1,2-PD-specific bacterial microcompartment (BMC) concentrates low levels of 1,2-PD catabolic enzymes, concentrates volatile reaction intermediates thus enhancing pathway flux and keeps the level of toxic, mutagenic propionaldehyde low. This chain is Bacterial microcompartment shell protein PduB, found in Citrobacter freundii.